Here is a 405-residue protein sequence, read N- to C-terminus: 5-azacytidine-induced protein 2 (405 aa).

Positions 1 to 198 (MDTLVEDDIC…TELQKARQTG (198 aa)) are homodimerization. The stretch at 40 to 197 (ALVTAYEDIK…RTELQKARQT (158 aa)) forms a coiled coil. Residues 229-270 (SDNMQHAYWELKREMSNLHLVTQVQAELLRKLKTSAAVKKAC) form an interaction with TBK1 and IKBKE region. Residues Ser331 and Ser366 each carry the phosphoserine modification. The disordered stretch occupies residues 357 to 377 (LEDNSWVFPSPPKSSETAFGE).

Homodimer. Interacts with IKBKE and TBK1. Interacts with TICAM1. Interacts with TAX1BP1. Interacts with CALCOCO2. Post-translationally, ubiquitinated via 'Lys-48'-linked polyubiquitination by TRIM38, leading to its degradation. As to expression, testis, ovary, heart, lung, kidney and brain. Expressed mainly in the spermatocytes or spermatids in the testis.

It is found in the cytoplasm. Its function is as follows. Adapter protein which binds TBK1 and IKBKE playing a role in antiviral innate immunity. Activates serine/threonine-protein kinase TBK1 and facilitates its oligomerization. Enhances the phosphorylation of NF-kappa-B p65 subunit RELA by TBK1. Promotes TBK1-induced as well as TNF-alpha or PMA-induced activation of NF-kappa-B. Participates in IFNB promoter activation via TICAM1. This chain is 5-azacytidine-induced protein 2 (Azi2), found in Mus musculus (Mouse).